The following is a 73-amino-acid chain: Translation initiation factor IF-1 (73 aa).

The region spanning methionine 1–arginine 73 is the S1-like domain.

Belongs to the IF-1 family. As to quaternary structure, component of the 30S ribosomal translation pre-initiation complex which assembles on the 30S ribosome in the order IF-2 and IF-3, IF-1 and N-formylmethionyl-tRNA(fMet); mRNA recruitment can occur at any time during PIC assembly.

Its subcellular location is the cytoplasm. One of the essential components for the initiation of protein synthesis. Stabilizes the binding of IF-2 and IF-3 on the 30S subunit to which N-formylmethionyl-tRNA(fMet) subsequently binds. Helps modulate mRNA selection, yielding the 30S pre-initiation complex (PIC). Upon addition of the 50S ribosomal subunit IF-1, IF-2 and IF-3 are released leaving the mature 70S translation initiation complex. The chain is Translation initiation factor IF-1 from Chlamydia abortus (strain DSM 27085 / S26/3) (Chlamydophila abortus).